The chain runs to 353 residues: Histidinol-phosphate aminotransferase 1 (353 aa).

At Lys211 the chain carries N6-(pyridoxal phosphate)lysine.

It belongs to the class-II pyridoxal-phosphate-dependent aminotransferase family. Histidinol-phosphate aminotransferase subfamily. Homodimer. Requires pyridoxal 5'-phosphate as cofactor.

It catalyses the reaction L-histidinol phosphate + 2-oxoglutarate = 3-(imidazol-4-yl)-2-oxopropyl phosphate + L-glutamate. Its pathway is amino-acid biosynthesis; L-histidine biosynthesis; L-histidine from 5-phospho-alpha-D-ribose 1-diphosphate: step 7/9. The protein is Histidinol-phosphate aminotransferase 1 (hisC1) of Nostoc sp. (strain PCC 7120 / SAG 25.82 / UTEX 2576).